Consider the following 337-residue polypeptide: Mating-type protein MAT-2 (337 aa).

Residues 125–193 constitute a DNA-binding region (HMG box); the sequence is APRPMNCWII…EHLRQHPNYK (69 aa). Positions 171–219 are disordered; it reads KRPWQDAAQSAKEEHLRQHPNYKYTPRKPGEKKKRQSRKSKRAAATTTA. Over residues 200 to 212 the composition is skewed to basic residues; that stretch reads GEKKKRQSRKSKR.

The protein localises to the nucleus. The chain is Mating-type protein MAT-2 (MAT2) from Cochliobolus sativus (Common root rot and spot blotch fungus).